We begin with the raw amino-acid sequence, 711 residues long: MKSLILAEKPSVARDIAEAMNIKGKRNGYIENEKYVVTWALGHLVTNAQPEHYDKAYKEWKLEDLPIIPKRMQTVVIGKTSKQFKTVKSLILDKKVKEVIIATDAGREGELVARLILDKVHNKKPIKRLWISSVTKKAIQEGFKKLKDGREFQHLYEAALARSEADWIVGINATRALTTKYDAQLSLGRVQTPTIQLVNARQQEINHFKAKKYYTLSTEIGGLTFQLSTNKQHMTMEDATQIANEIKHVEGNVDSVEKKVKKSHPKPLYNLTDLQQEAYQRYKMGPKETLNTIQNLYERHKVLTYPRTDSNYLTDDMVDTIKERLYALLATDYKSQVKSLLGQSYSSKMRIFKNHKVSDHHAIIPTEVRPDMQSLSNRESKIYMMVAERFLESLMAPHEYEAVRVNVTVGQHIFAFNEKVTRQLGYKALKMNNDNVVKKVAFQKGEKYHLQSLKVNEHETTPPDYFNEGSLLKAMENPQNYIQLKEKKHANTLRQTGGIGTVATRADIIEKLFNLNAIESRDGKIKVTSKGKQILDLAPQELTSPLLTAEWEEKLLLIEKGRYNSRHFIDEMKAFTQSIVNTIKNSEQKYKHDNLTTTECPTCGKFMIKVKTKNGQMLVCQDPTCKTKKNVQRKTNARCPNCKKKMTLFGRGKDAVYRCVCGHTETQEQMDKRFKNKSSGKVSKKEMKKYMNNEDSLENNPFKDALKNLKL.

The Toprim domain maps to 2 to 135; the sequence is KSLILAEKPS…IKRLWISSVT (134 aa). Mg(2+) contacts are provided by Glu8 and Asp104. A Topo IA-type catalytic domain is found at 152-580; it reads FQHLYEAALA…EMKAFTQSIV (429 aa). An interaction with DNA region spans residues 186–191; sequence SLGRVQ. Tyr305 functions as the O-(5'-phospho-DNA)-tyrosine intermediate in the catalytic mechanism. The segment at 672-699 is disordered; that stretch reads KRFKNKSSGKVSKKEMKKYMNNEDSLEN. Residues 683–692 are compositionally biased toward basic and acidic residues; it reads SKKEMKKYMN.

The protein belongs to the type IA topoisomerase family. It depends on Mg(2+) as a cofactor.

It catalyses the reaction ATP-independent breakage of single-stranded DNA, followed by passage and rejoining.. Releases the supercoiling and torsional tension of DNA, which is introduced during the DNA replication and transcription, by transiently cleaving and rejoining one strand of the DNA duplex. Introduces a single-strand break via transesterification at a target site in duplex DNA. The scissile phosphodiester is attacked by the catalytic tyrosine of the enzyme, resulting in the formation of a DNA-(5'-phosphotyrosyl)-enzyme intermediate and the expulsion of a 3'-OH DNA strand. The free DNA strand then undergoes passage around the unbroken strand, thus removing DNA supercoils. Finally, in the religation step, the DNA 3'-OH attacks the covalent intermediate to expel the active-site tyrosine and restore the DNA phosphodiester backbone. This chain is DNA topoisomerase 3, found in Staphylococcus haemolyticus (strain JCSC1435).